The following is a 1039-amino-acid chain: uncharacterized protein (1039 aa).

Residues 1–28 form the signal peptide; the sequence is MKLFPRTLLKILVVSFILNFGVTSKSYA. Transmembrane regions (helical) follow at residues 326–346, 354–374, 387–407, 491–511, 517–537, and 551–571; these read IVTAFLTLYVMLFGAKILLAG, YINFILKIIFVTYFSIGLNIT, MIQWAFPFLLNGINGLASWVM, MLVSLALAYPLLVISVAAFMV, CMVSIVILGILAPLFVPMFLF, and MISFLLQPMVVVTFMITMFSV. Positions 654-680 are disordered; that stretch reads KPNQTCDPKAADADTKCNPKPGDSSTS. A helical transmembrane segment spans residues 710–730; it reads IKDILLALVTACFTLYLMYNF. Disordered stretches follow at residues 799–875, 917–949, and 1004–1039; these read LVKG…PTTV, IKEAVPESQKEEPKEPRVKHTTEVEPELNLDEN, and LYRSVGGRAKDKATERNDGTIENRSKKIDSGSDENP. The segment covering 802–811 has biased composition (gly residues); it reads GSGGGGGSEG. Residues 812 to 836 are compositionally biased toward low complexity; sequence GDSFTSGGLRETSSTAATPSSALSS. Positions 843–861 are enriched in polar residues; sequence GTATPSSASEEMLDTSFSN. 2 stretches are compositionally biased toward basic and acidic residues: residues 917–939 and 1004–1033; these read IKEAVPESQKEEPKEPRVKHTTE and LYRSVGGRAKDKATERNDGTIENRSKKIDS.

This sequence belongs to the TrbL/VirB6 family.

The protein resides in the cell membrane. This is an uncharacterized protein from Rickettsia bellii (strain RML369-C).